The sequence spans 59 residues: Large ribosomal subunit protein bL32 (59 aa).

A compositionally biased stretch (basic residues) spans 1-16; it reads MAVPKRKTSPSKRGMR. The segment at 1–20 is disordered; the sequence is MAVPKRKTSPSKRGMRRSHD.

This sequence belongs to the bacterial ribosomal protein bL32 family.

This is Large ribosomal subunit protein bL32 from Sphingopyxis alaskensis (strain DSM 13593 / LMG 18877 / RB2256) (Sphingomonas alaskensis).